The primary structure comprises 498 residues: Protein YhjJ (498 aa).

The signal sequence occupies residues 1–24; that stretch reads MQGTKIRLLAGGLLMMATAGYVQA.

The protein belongs to the peptidase M16 family.

The protein localises to the periplasm. The sequence is that of Protein YhjJ (yhjJ) from Escherichia coli (strain K12).